Consider the following 325-residue polypeptide: Putative 1-aminocyclopropane-1-carboxylate deaminase (325 aa).

An N6-(pyridoxal phosphate)lysine modification is found at Lys54.

This sequence belongs to the ACC deaminase/D-cysteine desulfhydrase family. Requires pyridoxal 5'-phosphate as cofactor.

It catalyses the reaction 1-aminocyclopropane-1-carboxylate + H2O = 2-oxobutanoate + NH4(+). This Pyrococcus horikoshii (strain ATCC 700860 / DSM 12428 / JCM 9974 / NBRC 100139 / OT-3) protein is Putative 1-aminocyclopropane-1-carboxylate deaminase.